The chain runs to 401 residues: Nodal homolog 3-A (401 aa).

The signal sequence occupies residues 1-18 (MAFLSLFLCLVFSSPLMA). A propeptide spanning residues 19–274 (MPPALQGRKA…KVNGFRRLRR (256 aa)) is cleaved from the precursor. N-linked (GlcNAc...) asparagine glycans are attached at residues Asn168, Asn337, and Asn344. Disulfide bonds link Cys299–Cys365 and Cys328–Cys396.

It belongs to the TGF-beta family. Monomer. The propeptide region interacts with bmp4 in a non-covalent manner. As to expression, expressed in the dorsal marginal region of late blastula, becoming restricted to the Spemann organizer at the early gastrula stage.

The protein resides in the secreted. Exhibits mesoderm-dorsalizing activity and neural-inducing activity, but lacks mesoderm-inducing activity. Regulates the expression of specific mesodermal and neural genes. Induces convergent extension movements at the embryonic midline by activating the fgf signaling pathway to induce t/bra expression in the organizer region. Acts with wnt11 to induce Spemann organizer cells and induce axis formation. The unprocessed protein antagonizes bmp-signaling. The polypeptide is Nodal homolog 3-A (Xenopus tropicalis (Western clawed frog)).